A 203-amino-acid polypeptide reads, in one-letter code: MGDTDVTSDANAPWLIVGLGNPGPEYARNRHNVGFMVADLLAERIGGKFKRAGKAQAQVIEGRIGPPGPANRRVILAKPMSYMNLSGGPVNALREFYKVPVANIVAVHDELDIDYGVLRLKLGGGDNGHNGLKSMTKAMGPDYHRVRFGIGRPPGRMQVADFVLKDFASAERKELDYLVDRAADAAECLVIEGLERAQGTYNS.

Tyr26 contributes to the tRNA binding site. His31 acts as the Proton acceptor in catalysis. Residues Tyr82, Asn84, and Asn130 each contribute to the tRNA site.

It belongs to the PTH family. In terms of assembly, monomer.

Its subcellular location is the cytoplasm. It carries out the reaction an N-acyl-L-alpha-aminoacyl-tRNA + H2O = an N-acyl-L-amino acid + a tRNA + H(+). Functionally, hydrolyzes ribosome-free peptidyl-tRNAs (with 1 or more amino acids incorporated), which drop off the ribosome during protein synthesis, or as a result of ribosome stalling. Its function is as follows. Catalyzes the release of premature peptidyl moieties from peptidyl-tRNA molecules trapped in stalled 50S ribosomal subunits, and thus maintains levels of free tRNAs and 50S ribosomes. The polypeptide is Peptidyl-tRNA hydrolase (Streptomyces avermitilis (strain ATCC 31267 / DSM 46492 / JCM 5070 / NBRC 14893 / NCIMB 12804 / NRRL 8165 / MA-4680)).